The chain runs to 290 residues: Acetyl-coenzyme A carboxylase carboxyl transferase subunit beta (290 aa).

The 263-residue stretch at 28–290 (IMTKCPKCKK…SRGGDEWHTN (263 aa)) folds into the CoA carboxyltransferase N-terminal domain. Residues Cys-32, Cys-35, Cys-51, and Cys-54 each contribute to the Zn(2+) site. The C4-type zinc finger occupies 32 to 54 (CPKCKKIMYTKELVKNLRVCISC).

It belongs to the AccD/PCCB family. In terms of assembly, acetyl-CoA carboxylase is a heterohexamer composed of biotin carboxyl carrier protein (AccB), biotin carboxylase (AccC) and two subunits each of ACCase subunit alpha (AccA) and ACCase subunit beta (AccD). It depends on Zn(2+) as a cofactor.

The protein resides in the cytoplasm. It catalyses the reaction N(6)-carboxybiotinyl-L-lysyl-[protein] + acetyl-CoA = N(6)-biotinyl-L-lysyl-[protein] + malonyl-CoA. Its pathway is lipid metabolism; malonyl-CoA biosynthesis; malonyl-CoA from acetyl-CoA: step 1/1. Component of the acetyl coenzyme A carboxylase (ACC) complex. Biotin carboxylase (BC) catalyzes the carboxylation of biotin on its carrier protein (BCCP) and then the CO(2) group is transferred by the transcarboxylase to acetyl-CoA to form malonyl-CoA. In Anoxybacillus flavithermus (strain DSM 21510 / WK1), this protein is Acetyl-coenzyme A carboxylase carboxyl transferase subunit beta.